The sequence spans 225 residues: Cytochrome c oxidase subunit 2 (225 aa).

Topologically, residues 1-25 (MSTWMMFMFQESNSFYADNLVSFHN) are mitochondrial intermembrane. Residues 26–47 (LVMMIIIMISTLTIYIIFDLFM) form a helical membrane-spanning segment. The Mitochondrial matrix portion of the chain corresponds to 48-62 (NKFSNLFLLKNHNIE). The helical transmembrane segment at 63–82 (IIWTIVPIVILLIICFPSLK) threads the bilayer. Over 83-225 (ILYLIDEIIN…FFLNWINKQN (143 aa)) the chain is Mitochondrial intermembrane. Cu cation-binding residues include histidine 159, cysteine 194, glutamate 196, cysteine 198, histidine 202, and methionine 205. Glutamate 196 contacts Mg(2+).

It belongs to the cytochrome c oxidase subunit 2 family. As to quaternary structure, component of the cytochrome c oxidase (complex IV, CIV), a multisubunit enzyme composed of a catalytic core of 3 subunits and several supernumerary subunits. The complex exists as a monomer or a dimer and forms supercomplexes (SCs) in the inner mitochondrial membrane with ubiquinol-cytochrome c oxidoreductase (cytochrome b-c1 complex, complex III, CIII). It depends on Cu cation as a cofactor.

Its subcellular location is the mitochondrion inner membrane. It carries out the reaction 4 Fe(II)-[cytochrome c] + O2 + 8 H(+)(in) = 4 Fe(III)-[cytochrome c] + 2 H2O + 4 H(+)(out). Its function is as follows. Component of the cytochrome c oxidase, the last enzyme in the mitochondrial electron transport chain which drives oxidative phosphorylation. The respiratory chain contains 3 multisubunit complexes succinate dehydrogenase (complex II, CII), ubiquinol-cytochrome c oxidoreductase (cytochrome b-c1 complex, complex III, CIII) and cytochrome c oxidase (complex IV, CIV), that cooperate to transfer electrons derived from NADH and succinate to molecular oxygen, creating an electrochemical gradient over the inner membrane that drives transmembrane transport and the ATP synthase. Cytochrome c oxidase is the component of the respiratory chain that catalyzes the reduction of oxygen to water. Electrons originating from reduced cytochrome c in the intermembrane space (IMS) are transferred via the dinuclear copper A center (CU(A)) of subunit 2 and heme A of subunit 1 to the active site in subunit 1, a binuclear center (BNC) formed by heme A3 and copper B (CU(B)). The BNC reduces molecular oxygen to 2 water molecules using 4 electrons from cytochrome c in the IMS and 4 protons from the mitochondrial matrix. This Apis koschevnikovi (Koschevnikov's honey bee) protein is Cytochrome c oxidase subunit 2 (COII).